Here is a 117-residue protein sequence, read N- to C-terminus: Cuticular protein 47Eg (117 aa).

The first 16 residues, methionine 1–alanine 16, serve as a signal peptide directing secretion. One can recognise a Chitin-binding type R&amp;R domain in the interval valine 31 to proline 97.

In terms of biological role, component of the larval cuticle. The chain is Cuticular protein 47Eg (Cpr47Eg) from Drosophila melanogaster (Fruit fly).